A 340-amino-acid polypeptide reads, in one-letter code: Entry-fusion complex protein OPG094 (340 aa).

The disordered stretch occupies residues 1–20; the sequence is MGGGVSVELPKRDPPPGVPT. A lipid anchor (N-myristoyl glycine; by host) is attached at glycine 2. Topologically, residues 2 to 319 are virion surface; that stretch reads GGGVSVELPK…VQHNIKHSFD (318 aa). Residues 320–340 traverse the membrane as a helical; Signal-anchor for type II membrane protein segment; sequence LKLHLISLLSLLVIWILIVAI.

The protein belongs to the orthopoxvirus OPG086 family. As to quaternary structure, interacts with OPG143. Component of the entry fusion complex (EFC) composed of OPG053, OPG076, OPG086, OPG094, OPG095, OPG099, OPG107, OPG143, OPG104, OPG147 and OPG155. Except for OPG095 and OPG053, each of the EFC proteins is required for assembly or stability of the complex. In terms of processing, unglycosylated because produced in viral factories instead of the classic ER -Golgi route.

The protein resides in the virion membrane. In terms of biological role, component of the entry fusion complex (EFC), which consists of 11 proteins. During cell infection, this complex mediates entry of the virion core into the host cytoplasm by a two-step mechanism consisting of lipid mixing of the viral and cellular membranes and subsequent pore formation. This is Entry-fusion complex protein OPG094 (OPG094) from Vaccinia virus (strain Copenhagen) (VACV).